The sequence spans 452 residues: uncharacterized protein (452 aa).

The next 14 membrane-spanning stretches (helical) occupy residues 8–28, 39–59, 77–97, 100–122, 134–156, 161–183, 203–222, 226–243, 266–286, 302–322, 330–350, 359–379, 393–415, and 425–447; these read AVFL…SSMI, FHLS…ASAV, FLFG…APTF, LLVM…VGLI, LAVL…GFLI, WPAI…LYMF, LGIV…LLSF, PHAV…AFVW, AVYV…FGLP, LFML…GKWI, PIFA…IFFI, LILS…QAAM, GLFQ…ILFG, and MMGI…FAAL.

It belongs to the major facilitator superfamily.

Its subcellular location is the cell membrane. This is an uncharacterized protein from Bacillus subtilis (strain 168).